We begin with the raw amino-acid sequence, 492 residues long: Replication factor C large subunit (492 aa).

ATP is bound at residue 46 to 53 (GPPGSGKT). A disordered region spans residues 445–492 (VIPKRPKISDNQISEILTKDNNPKDDVKKASKKPESTSKKQATLDKFF). A compositionally biased stretch (basic and acidic residues) spans 461–482 (LTKDNNPKDDVKKASKKPESTS).

This sequence belongs to the activator 1 small subunits family. RfcL subfamily. Heteromultimer composed of small subunits (RfcS) and large subunits (RfcL).

Functionally, part of the RFC clamp loader complex which loads the PCNA sliding clamp onto DNA. The chain is Replication factor C large subunit from Methanococcus vannielii (strain ATCC 35089 / DSM 1224 / JCM 13029 / OCM 148 / SB).